The following is a 50-amino-acid chain: Protein hunchback (50 aa).

C2H2-type zinc fingers lie at residues 1–5 (HLRNH), 11–33 (FKCN…MKSH), and 39–50 (YRCADCTYATKY).

This sequence belongs to the hunchback C2H2-type zinc-finger protein family.

The protein localises to the nucleus. Functionally, gap class segmentation protein that controls development of head structures. The sequence is that of Protein hunchback (hb) from Platynereis dumerilii (Dumeril's clam worm).